The sequence spans 157 residues: Endoribonuclease YbeY (157 aa).

His123, His127, and His133 together coordinate Zn(2+).

This sequence belongs to the endoribonuclease YbeY family. The cofactor is Zn(2+).

It is found in the cytoplasm. Its function is as follows. Single strand-specific metallo-endoribonuclease involved in late-stage 70S ribosome quality control and in maturation of the 3' terminus of the 16S rRNA. The polypeptide is Endoribonuclease YbeY (Desulfitobacterium hafniense (strain Y51)).